A 144-amino-acid chain; its full sequence is Transcription antitermination protein NusB (144 aa).

The protein belongs to the NusB family.

Functionally, involved in transcription antitermination. Required for transcription of ribosomal RNA (rRNA) genes. Binds specifically to the boxA antiterminator sequence of the ribosomal RNA (rrn) operons. In Haemophilus influenzae (strain PittGG), this protein is Transcription antitermination protein NusB.